We begin with the raw amino-acid sequence, 501 residues long: Probable cytosol aminopeptidase (501 aa).

K268 and D273 together coordinate Mn(2+). K280 is an active-site residue. The Mn(2+) site is built by D291, D350, and E352. The active site involves R354.

The protein belongs to the peptidase M17 family. It depends on Mn(2+) as a cofactor.

The protein localises to the cytoplasm. The enzyme catalyses Release of an N-terminal amino acid, Xaa-|-Yaa-, in which Xaa is preferably Leu, but may be other amino acids including Pro although not Arg or Lys, and Yaa may be Pro. Amino acid amides and methyl esters are also readily hydrolyzed, but rates on arylamides are exceedingly low.. The catalysed reaction is Release of an N-terminal amino acid, preferentially leucine, but not glutamic or aspartic acids.. Its function is as follows. Presumably involved in the processing and regular turnover of intracellular proteins. Catalyzes the removal of unsubstituted N-terminal amino acids from various peptides. The sequence is that of Probable cytosol aminopeptidase from Pseudoalteromonas atlantica (strain T6c / ATCC BAA-1087).